The chain runs to 533 residues: Tryptophan N-monooxygenase CYP79A68 (533 aa).

Residues 12–32 (VTPPISLSLAFIIFMFLVKFI) form a helical membrane-spanning segment. The N-linked (GlcNAc...) asparagine glycan is linked to Asn209. Cys471 is a binding site for heme.

Belongs to the cytochrome P450 family. Heme serves as cofactor. As to expression, confined to buds.

It is found in the membrane. The catalysed reaction is L-tryptophan + 2 reduced [NADPH--hemoprotein reductase] + 2 O2 = (E)-(indol-3-yl)acetaldehyde oxime + 2 oxidized [NADPH--hemoprotein reductase] + CO2 + 3 H2O + 2 H(+). In terms of biological role, catalyzes with low efficiency E and Z isomers of indole-3-acetaldoxime from tryptophan (Trp). The polypeptide is Tryptophan N-monooxygenase CYP79A68 (Prunus mume (Japanese apricot)).